The chain runs to 150 residues: D-aminoacyl-tRNA deacylase (150 aa).

The Gly-cisPro motif, important for rejection of L-amino acids signature appears at 136-137; sequence GP.

Belongs to the DTD family. In terms of assembly, homodimer.

It is found in the cytoplasm. The catalysed reaction is glycyl-tRNA(Ala) + H2O = tRNA(Ala) + glycine + H(+). It catalyses the reaction a D-aminoacyl-tRNA + H2O = a tRNA + a D-alpha-amino acid + H(+). Its function is as follows. An aminoacyl-tRNA editing enzyme that deacylates mischarged D-aminoacyl-tRNAs. Also deacylates mischarged glycyl-tRNA(Ala), protecting cells against glycine mischarging by AlaRS. Acts via tRNA-based rather than protein-based catalysis; rejects L-amino acids rather than detecting D-amino acids in the active site. By recycling D-aminoacyl-tRNA to D-amino acids and free tRNA molecules, this enzyme counteracts the toxicity associated with the formation of D-aminoacyl-tRNA entities in vivo and helps enforce protein L-homochirality. The sequence is that of D-aminoacyl-tRNA deacylase from Staphylococcus saprophyticus subsp. saprophyticus (strain ATCC 15305 / DSM 20229 / NCIMB 8711 / NCTC 7292 / S-41).